The following is a 639-amino-acid chain: Elongation factor 4 (639 aa).

The region spanning 39–220 is the tr-type G domain; sequence AQIRNFCIIA…EVVRLVPPPT (182 aa). Residues 51 to 56 and 167 to 170 each bind GTP; these read DHGKST and NKID.

It belongs to the TRAFAC class translation factor GTPase superfamily. Classic translation factor GTPase family. LepA subfamily.

The protein resides in the cell membrane. The enzyme catalyses GTP + H2O = GDP + phosphate + H(+). Its function is as follows. Required for accurate and efficient protein synthesis under certain stress conditions. May act as a fidelity factor of the translation reaction, by catalyzing a one-codon backward translocation of tRNAs on improperly translocated ribosomes. Back-translocation proceeds from a post-translocation (POST) complex to a pre-translocation (PRE) complex, thus giving elongation factor G a second chance to translocate the tRNAs correctly. Binds to ribosomes in a GTP-dependent manner. This is Elongation factor 4 from Mycobacterium sp. (strain JLS).